The sequence spans 258 residues: Fibroblast growth factor-binding protein 3 (258 aa).

Positions 1–26 are cleaved as a signal peptide; that stretch reads MTPPKLRASLSPSLLLLLSGCLLAAA. 2 disulfides stabilise this stretch: Cys-59–Cys-80 and Cys-90–Cys-124. The disordered stretch occupies residues 146-231; the sequence is RLVPRASPPA…GTGPDPDGLD (86 aa). Residues 186–197 are compositionally biased toward pro residues; that stretch reads GTPPPQSAPPKE. A compositionally biased stretch (basic and acidic residues) spans 198–209; it reads NPSERKTNEGKR. Cysteines 241 and 249 form a disulfide.

This sequence belongs to the fibroblast growth factor-binding protein family. Interacts with FGF2.

Its subcellular location is the secreted. Its function is as follows. Heparin-binding protein which binds to FGF2, prevents binding of FGF2 to heparin and probably inhibits immobilization of FGF2 on extracellular matrix glycosaminoglycans, allowing its release and subsequent activation of FGFR signaling which leads to increased vascular permeability. The protein is Fibroblast growth factor-binding protein 3 (FGFBP3) of Homo sapiens (Human).